Reading from the N-terminus, the 427-residue chain is Serine hydroxymethyltransferase (427 aa).

Residue 120 to 122 (GHI) participates in (6S)-5,6,7,8-tetrahydrofolate binding. K226 is modified (N6-(pyridoxal phosphate)lysine).

The protein belongs to the SHMT family. Homodimer. It depends on pyridoxal 5'-phosphate as a cofactor.

Its subcellular location is the cytoplasm. It participates in amino-acid biosynthesis; glycine biosynthesis; glycine from L-serine: step 1/1. Catalyzes the reversible interconversion of serine and glycine with a modified folate serving as the one-carbon carrier. Also exhibits a pteridine-independent aldolase activity toward beta-hydroxyamino acids, producing glycine and aldehydes, via a retro-aldol mechanism. The polypeptide is Serine hydroxymethyltransferase (Pyrococcus furiosus (strain ATCC 43587 / DSM 3638 / JCM 8422 / Vc1)).